The primary structure comprises 186 residues: Elongation factor P (186 aa).

The protein belongs to the elongation factor P family.

Its subcellular location is the cytoplasm. The protein operates within protein biosynthesis; polypeptide chain elongation. Functionally, involved in peptide bond synthesis. Stimulates efficient translation and peptide-bond synthesis on native or reconstituted 70S ribosomes in vitro. Probably functions indirectly by altering the affinity of the ribosome for aminoacyl-tRNA, thus increasing their reactivity as acceptors for peptidyl transferase. The sequence is that of Elongation factor P from Streptococcus gordonii (strain Challis / ATCC 35105 / BCRC 15272 / CH1 / DL1 / V288).